The chain runs to 503 residues: ATP synthase subunit alpha (503 aa).

Residue 171–178 participates in ATP binding; sequence DRQTGKTA.

The protein belongs to the ATPase alpha/beta chains family. As to quaternary structure, F-type ATPases have 2 components, CF(1) - the catalytic core - and CF(0) - the membrane proton channel. CF(1) has five subunits: alpha(3), beta(3), gamma(1), delta(1), epsilon(1). CF(0) has four main subunits: a(1), b(1), b'(1) and c(9-12).

It localises to the cellular thylakoid membrane. The catalysed reaction is ATP + H2O + 4 H(+)(in) = ADP + phosphate + 5 H(+)(out). Functionally, produces ATP from ADP in the presence of a proton gradient across the membrane. The alpha chain is a regulatory subunit. This chain is ATP synthase subunit alpha, found in Synechococcus sp. (strain PCC 6716).